The chain runs to 30 residues: Vitri peptide A (30 aa).

A cross-link (cyclopeptide (Gly-Asn)) is located at residues 1 to 30 (GIPCGESCVWIPCITSAIGCSCKSKVCYRN). 3 disulfide bridges follow: Cys4–Cys20, Cys8–Cys22, and Cys13–Cys27.

This is a cyclic peptide.

Probably participates in a plant defense mechanism. Has strong cytotoxic activity against human lymphoma U-937 GTB and human myeloma RPMI-8226/s cell lines. In Viola arvensis (European field pansy), this protein is Vitri peptide A.